Here is a 357-residue protein sequence, read N- to C-terminus: MLIFFNKYLHINLNILSYIPYRAIFSLLTSFFINLYIGPYFIYYFKKLQKYQIIRNNGPKTHYSKKNTPTMGGIFIIFSILFSTILYCNLSNIYIWYVISILIGYGLIGFIDDYKKIKYKNSQGLKLKWKYFFLSIIAFIFICMIKINNKDIISTELIIPFCIKNDFEINYLYVFLSYFVLVGTSNAVNLTDGLDGLAIMPVIFLTCGLTLISLFSDNINISHYLHVHYVKNSTELAILCMAIVGSGLGFLWFNSYPAKVFMGDVGSLALGGSLGAIAILLHQELLLIIMGGIFVFETISVILQIISFKIRKKRIFQMAPVHHHYEVKGILEPLIIVRFWIVSLILLLISLISLKVC.

A run of 10 helical transmembrane segments spans residues 23–43 (AIFS…YFIY), 70–90 (TMGG…YCNL), 91–111 (SNIY…IGFI), 127–147 (LKWK…MIKI), 171–191 (YLYV…VNLT), 196–216 (GLAI…SLFS), 236–256 (LAIL…FNSY), 260–280 (VFMG…IAIL), 286–306 (LLII…LQII), and 334–354 (LIIV…LISL).

The protein belongs to the glycosyltransferase 4 family. MraY subfamily. Mg(2+) serves as cofactor.

It is found in the cell inner membrane. It catalyses the reaction UDP-N-acetyl-alpha-D-muramoyl-L-alanyl-gamma-D-glutamyl-meso-2,6-diaminopimeloyl-D-alanyl-D-alanine + di-trans,octa-cis-undecaprenyl phosphate = di-trans,octa-cis-undecaprenyl diphospho-N-acetyl-alpha-D-muramoyl-L-alanyl-D-glutamyl-meso-2,6-diaminopimeloyl-D-alanyl-D-alanine + UMP. Its pathway is cell wall biogenesis; peptidoglycan biosynthesis. Catalyzes the initial step of the lipid cycle reactions in the biosynthesis of the cell wall peptidoglycan: transfers peptidoglycan precursor phospho-MurNAc-pentapeptide from UDP-MurNAc-pentapeptide onto the lipid carrier undecaprenyl phosphate, yielding undecaprenyl-pyrophosphoryl-MurNAc-pentapeptide, known as lipid I. The polypeptide is Phospho-N-acetylmuramoyl-pentapeptide-transferase (Buchnera aphidicola subsp. Acyrthosiphon pisum (strain Tuc7)).